The primary structure comprises 972 residues: Hyaluronan synthase (972 aa).

Positions 152–325 (KPEHQHVGLS…VSLDWRLEQF (174 aa)) are A1. The segment at 432–604 (EDSHINRVPL…IRAWHLTDGF (173 aa)) is A2.

Belongs to the glycosyltransferase 2 family. CS/HAS subfamily. Requires Mg(2+) as cofactor. Co(2+) is required as a cofactor.

The protein localises to the cell membrane. The catalysed reaction is [hyaluronan](n) + UDP-N-acetyl-alpha-D-glucosamine = N-acetyl-beta-D-glucosaminyl-(1-&gt;4)-[hyaluronan](n) + UDP + H(+). The enzyme catalyses N-acetyl-beta-D-glucosaminyl-(1-&gt;4)-[hyaluronan](n) + UDP-alpha-D-glucuronate = [hyaluronan](n+1) + UDP + H(+). It carries out the reaction 3-O-(beta-D-GalNAc-(1-&gt;4)-beta-D-GlcA-(1-&gt;3)-beta-D-Gal-(1-&gt;3)-beta-D-Gal-(1-&gt;4)-beta-D-Xyl)-L-seryl-[protein] + UDP-alpha-D-glucuronate = 3-O-(beta-D-GlcA-(1-&gt;3)-beta-D-GalNAc-(1-&gt;4)-beta-D-GlcA-(1-&gt;3)-beta-D-Gal-(1-&gt;3)-beta-D-Gal-(1-&gt;4)-beta-D-Xyl)-L-seryl-[protein] + UDP + H(+). It catalyses the reaction 3-O-{[beta-D-GalNAc-(1-&gt;4)-beta-D-GlcA-(1-&gt;3)](n)-beta-D-GalNAc-(1-&gt;4)-beta-D-GlcA-(1-&gt;3)-beta-D-Gal-(1-&gt;3)-beta-D-Gal-(1-&gt;4)-beta-D-Xyl}-L-seryl-[protein] + UDP-alpha-D-glucuronate = 3-O-{beta-D-GlcA-(1-&gt;3)-[beta-D-GalNAc-(1-&gt;4)-beta-D-GlcA-(1-&gt;3)](n)-beta-D-GalNAc-(1-&gt;4)-beta-D-GlcA-(1-&gt;3)-beta-D-Gal-(1-&gt;3)-beta-D-Gal-(1-&gt;4)-beta-D-Xyl}-L-seryl-[protein] + UDP + H(+). Functionally, catalyzes the polymerization of hyaluronan, a polysaccharide composed of a repeating disaccharide of N-acetylglucosamine (GlcNAc) and glucuronic acid (GlcUA) units. Each unit has the composition in beta-(1-&gt;4)-GlcUA-beta-(1-&gt;3)-GlcNAc. The sequence is that of Hyaluronan synthase (hyaD) from Pasteurella multocida.